A 97-amino-acid chain; its full sequence is Co-chaperonin GroES (97 aa).

This sequence belongs to the GroES chaperonin family. As to quaternary structure, heptamer of 7 subunits arranged in a ring. Interacts with the chaperonin GroEL.

The protein resides in the cytoplasm. Its function is as follows. Together with the chaperonin GroEL, plays an essential role in assisting protein folding. The GroEL-GroES system forms a nano-cage that allows encapsulation of the non-native substrate proteins and provides a physical environment optimized to promote and accelerate protein folding. GroES binds to the apical surface of the GroEL ring, thereby capping the opening of the GroEL channel. This chain is Co-chaperonin GroES, found in Pseudomonas savastanoi pv. phaseolicola (strain 1448A / Race 6) (Pseudomonas syringae pv. phaseolicola (strain 1448A / Race 6)).